Reading from the N-terminus, the 73-residue chain is Maltose-binding periplasmic protein (73 aa).

Positions 1–30 are cleaved as a signal peptide; the sequence is MMTKTNLKMGARTLALSVLATLVLSASALA.

Belongs to the bacterial solute-binding protein 1 family.

It is found in the periplasm. Its function is as follows. Involved in the high-affinity maltose membrane transport system. Initial receptor for the active transport of and chemotaxis toward maltooligosaccharides. The sequence is that of Maltose-binding periplasmic protein (malE) from Photorhabdus luminescens (Xenorhabdus luminescens).